Here is a 77-residue protein sequence, read N- to C-terminus: UPF0291 protein Bsph_1689 (77 aa).

Belongs to the UPF0291 family.

The protein resides in the cytoplasm. The protein is UPF0291 protein Bsph_1689 of Lysinibacillus sphaericus (strain C3-41).